A 262-amino-acid polypeptide reads, in one-letter code: MAVVASRCTGLLLPDLGASLAGFRRRRSTPASSLSFRPRRARRRLGSLSCIAPPDSAEPQTDEPAAKDDSTEDKAEASSASQDAGNPTFPNKDLSRRIALASTIGAVGLFAYQRLDFGGVSLKDLAANATPYEEALSNGKPTVVEFYADWCEVCRELAPDVYKVEQQYKDRVNFVMLNVDNTKWEQELDEFGVEGIPHFAFLDKEGNEEGNVVGRLPKQYFLDNVVALASGEPTVPHARVVGQFSSAESRKVHQVADPRSHG.

The transit peptide at 1-54 (MAVVASRCTGLLLPDLGASLAGFRRRRSTPASSLSFRPRRARRRLGSLSCIAPP) directs the protein to the chloroplast. Residues 47-90 (SLSCIAPPDSAEPQTDEPAAKDDSTEDKAEASSASQDAGNPTFP) form a disordered region. Residues 64–76 (PAAKDDSTEDKAE) show a composition bias toward basic and acidic residues. Residues 78 to 89 (SSASQDAGNPTF) show a composition bias toward polar residues. A Thioredoxin domain is found at 78-230 (SSASQDAGNP…FLDNVVALAS (153 aa)). Catalysis depends on nucleophile residues Cys151 and Cys154. Cys151 and Cys154 form a disulfide bridge.

Belongs to the thioredoxin family.

It localises to the plastid. It is found in the chloroplast. Functionally, probable thiol-disulfide oxidoreductase that may participate in various redox reactions in the chloroplast. The protein is Thioredoxin-like protein HCF164, chloroplastic of Oryza sativa subsp. japonica (Rice).